Consider the following 152-residue polypeptide: Deoxyuridine 5'-triphosphate nucleotidohydrolase (152 aa).

Residues 71–73, N84, 88–90, and M98 contribute to the substrate site; these read RSG and LID.

This sequence belongs to the dUTPase family. Mg(2+) is required as a cofactor.

It carries out the reaction dUTP + H2O = dUMP + diphosphate + H(+). Its pathway is pyrimidine metabolism; dUMP biosynthesis; dUMP from dCTP (dUTP route): step 2/2. This enzyme is involved in nucleotide metabolism: it produces dUMP, the immediate precursor of thymidine nucleotides and it decreases the intracellular concentration of dUTP so that uracil cannot be incorporated into DNA. The protein is Deoxyuridine 5'-triphosphate nucleotidohydrolase of Shewanella amazonensis (strain ATCC BAA-1098 / SB2B).